A 102-amino-acid polypeptide reads, in one-letter code: Urease subunit beta (102 aa).

Belongs to the urease beta subunit family. Heterotrimer of UreA (gamma), UreB (beta) and UreC (alpha) subunits. Three heterotrimers associate to form the active enzyme.

Its subcellular location is the cytoplasm. The enzyme catalyses urea + 2 H2O + H(+) = hydrogencarbonate + 2 NH4(+). The protein operates within nitrogen metabolism; urea degradation; CO(2) and NH(3) from urea (urease route): step 1/1. This chain is Urease subunit beta, found in Methylobacillus flagellatus (strain ATCC 51484 / DSM 6875 / VKM B-1610 / KT).